A 931-amino-acid chain; its full sequence is Isoleucine--tRNA ligase (931 aa).

Positions 57 to 67 (PFANGNIHMGH) match the 'HIGH' region motif. E556 is an L-isoleucyl-5'-AMP binding site. The short motif at 597 to 601 (KMSKS) is the 'KMSKS' region element. Residue K600 participates in ATP binding. 4 residues coordinate Zn(2+): C890, C893, C910, and C913.

The protein belongs to the class-I aminoacyl-tRNA synthetase family. IleS type 1 subfamily. Monomer. Requires Zn(2+) as cofactor.

It localises to the cytoplasm. It carries out the reaction tRNA(Ile) + L-isoleucine + ATP = L-isoleucyl-tRNA(Ile) + AMP + diphosphate. In terms of biological role, catalyzes the attachment of isoleucine to tRNA(Ile). As IleRS can inadvertently accommodate and process structurally similar amino acids such as valine, to avoid such errors it has two additional distinct tRNA(Ile)-dependent editing activities. One activity is designated as 'pretransfer' editing and involves the hydrolysis of activated Val-AMP. The other activity is designated 'posttransfer' editing and involves deacylation of mischarged Val-tRNA(Ile). The chain is Isoleucine--tRNA ligase from Lactobacillus delbrueckii subsp. bulgaricus (strain ATCC BAA-365 / Lb-18).